We begin with the raw amino-acid sequence, 843 residues long: RNA-binding protein 25 (843 aa).

The segment at 1–30 (MSFPPHLNRPPMGIPALPPGIPPPQFPGFP) is disordered. The segment covering 12–30 (MGIPALPPGIPPPQFPGFP) has biased composition (pro residues). The 78-residue stretch at 87 to 164 (TTVFVGNISE…KKLLVKVDAK (78 aa)) folds into the RRM domain. Lys-135 carries the post-translational modification N6-acetyllysine. 2 disordered regions span residues 171-202 (EWKAKKKASNGNARPETVTNDDEEALDEETKR) and 219-243 (SSELNAPSQESDSHPRKKKKEKKED). 2 positions are modified to phosphoserine: Ser-226 and Ser-229. Glycyl lysine isopeptide (Lys-Gly) (interchain with G-Cter in SUMO2) cross-links involve residues Lys-261, Lys-273, and Lys-430. Composition is skewed to basic and acidic residues over residues 280 to 433 (EISK…KRDR) and 521 to 573 (RLRD…ERRR). Disordered regions lie at residues 280–442 (EISK…DAYE) and 498–688 (EFLE…KRKK). The tract at residues 285-644 (RDTHKKLEEE…PNTPGDESPC (360 aa)) is necessary for nuclear speckle localization. Lys-578 is covalently cross-linked (Glycyl lysine isopeptide (Lys-Gly) (interchain with G-Cter in SUMO2)). A Phosphoserine modification is found at Ser-583. A compositionally biased stretch (basic and acidic residues) spans 590 to 599 (KQEKEEKREE). Over residues 621-630 (SSAPSVSSAS) the composition is skewed to low complexity. Lys-671 is covalently cross-linked (Glycyl lysine isopeptide (Lys-Gly) (interchain with G-Cter in SUMO2)). Positions 674–683 (ASNSPGQPNS) are enriched in polar residues. Phosphoserine occurs at positions 677 and 683. Glycyl lysine isopeptide (Lys-Gly) (interchain with G-Cter in SUMO2) cross-links involve residues Lys-688 and Lys-697. Ser-703 carries the post-translational modification Phosphoserine. A Glycyl lysine isopeptide (Lys-Gly) (interchain with G-Cter in SUMO2) cross-link involves residue Lys-722. One can recognise a PWI domain in the interval 750-843 (PELFAYPLDW…TEAKKIGLVK (94 aa)).

In terms of assembly, interacts with LUC7L3 and SRRM1. Specifically associates with functional splicing complexes, including Sm proteins and U1, U2, U4, U5 and U6 snRNAs. Associates with exon junction complex (EJC) proteins, including APEX1, DDX39B, NCBP1, RBM8A and RNPS1. Interaction with NCBP1 is RNA-dependent. Sumoylated.

The protein localises to the nucleus speckle. It localises to the cytoplasm. In terms of biological role, RNA-binding protein that acts as a regulator of alternative pre-mRNA splicing. Involved in apoptotic cell death through the regulation of the apoptotic factor BCL2L1 isoform expression. Modulates the ratio of proapoptotic BCL2L1 isoform S to antiapoptotic BCL2L1 isoform L mRNA expression. When overexpressed, stimulates proapoptotic BCL2L1 isoform S 5'-splice site (5'-ss) selection, whereas its depletion caused the accumulation of antiapoptotic BCL2L1 isoform L. Promotes BCL2L1 isoform S 5'-ss usage through the 5'-CGGGCA-3' RNA sequence. Its association with LUC7L3 promotes U1 snRNP binding to a weak 5' ss in a 5'-CGGGCA-3'-dependent manner. Binds to the exonic splicing enhancer 5'-CGGGCA-3' RNA sequence located within exon 2 of the BCL2L1 pre-mRNA. Also involved in the generation of an abnormal and truncated splice form of SCN5A in heart failure. The polypeptide is RNA-binding protein 25 (RBM25) (Homo sapiens (Human)).